We begin with the raw amino-acid sequence, 160 residues long: Cyanate hydratase (160 aa).

Catalysis depends on residues Arg-100, Glu-103, and Ser-126.

Belongs to the cyanase family.

It carries out the reaction cyanate + hydrogencarbonate + 3 H(+) = NH4(+) + 2 CO2. Functionally, catalyzes the reaction of cyanate with bicarbonate to produce ammonia and carbon dioxide. The sequence is that of Cyanate hydratase from Penicillium rubens (strain ATCC 28089 / DSM 1075 / NRRL 1951 / Wisconsin 54-1255) (Penicillium chrysogenum).